We begin with the raw amino-acid sequence, 250 residues long: Triosephosphate isomerase (250 aa).

N10 and K12 together coordinate substrate. The active-site Electrophile is the H94. The Proton acceptor role is filled by E167.

The protein belongs to the triosephosphate isomerase family. As to quaternary structure, homodimer.

It localises to the cytoplasm. The enzyme catalyses D-glyceraldehyde 3-phosphate = dihydroxyacetone phosphate. The protein operates within carbohydrate biosynthesis; gluconeogenesis. It participates in carbohydrate degradation; glycolysis; D-glyceraldehyde 3-phosphate from glycerone phosphate: step 1/1. The chain is Triosephosphate isomerase from Taenia solium (Pork tapeworm).